Reading from the N-terminus, the 185-residue chain is Stathmin-4 (185 aa).

An SLD domain is found at 48 to 185 (SDMEVIELNK…EVRKNKEATR (138 aa)). Residues 90–185 (SLEEIQKKLE…EVRKNKEATR (96 aa)) are a coiled coil. Residues 165 to 185 (ERLQEKDKHAEEVRKNKEATR) form a disordered region. The segment covering 166-185 (RLQEKDKHAEEVRKNKEATR) has biased composition (basic and acidic residues).

It belongs to the stathmin family. In terms of tissue distribution, nervous tissue.

The polypeptide is Stathmin-4 (stmn4) (Xenopus laevis (African clawed frog)).